Here is a 1004-residue protein sequence, read N- to C-terminus: MSELFDEAPRDPGPPARSGSRRSRALIVTAVVLVIGFLGLSTFAGIYTDRLWYVSGGYGAVFTTLFWTKTVLFFLFGAGMALVVGVNIYLAYRFRPFFRPNSPEQNGLDRYREAINPIRTWLLVGVALVLGAFAGSSAIGEWRDYLLWRNGTSFGSEDAYFQKDIGFYVFDLPWLHYLVDYAMAVLVVALIAAAVVHYLYGGIRLQTPRDRLSGAAQAQISVLLGFFVLAKAADYWLDRFDLVSQGGGVITGMTYTDDHAVLPAKNILLGISIICAVLFFVNVWRRTWLLPSVGLALLAVSAILLGLIWPGIVQQFQVKPSEADKEAPYIEKNIEATRTAYDVANVDVEKYDPATALGAGSASMVEEETSSVPLVDPQLVRDAFEQNQQVRAYYSVAQVLDVDRYDIDGNDRALVLGVRELDQSGMNAGDRNWTNLHTVYTHGNGIIAAFANQRSEDNKTQIDNADNTGDQAGIVWAQGTNAGQDALARATGGFEDRIYYGEQSPQYSVVGKATPDSTDVELNLQTAGSDEGSTTTYDGNGDASVGGFFNQLMFATKFGEPNFLLSGRVNPNSKVLFNRNPADRVEKVAPWLTVDSDPYPAVVDGRILWIIDGYTTTDRYPLSEKESFQTMIDDSLQEETGLRTLPTDEINYMRNAVKATVDAYTGDVTLYAWDEEDPILQAWRSAFPGTVEDKSEISDDLLDHLRYPEDLFQVQRYQFARYHVTEPIDFYQGNNRWQVPEDPYSKGKFQPPYRLFVDSNGGTDQVFALTSVYVPYNKNNLASFVSVNADATSDQYGQMQVLELPNEQTPGPGQVANQFATDPEVANELAQFNRSGARPVYGNLLTLPINDGLMYVQPVYATQALSDSSFPILRYVLVKYGNDIGFGSTLRDALENLLGVSTGPGTQPPDTGQPGDNENPPPATGTVAAQIRALLAQAQDAFDAADAALADGNLAEYQRQIGIAQANVEAAMELGQKRGSAGQPSGSPSGSASSSPSESPSPSS.

A disordered region spans residues 1–20 (MSELFDEAPRDPGPPARSGS). 7 consecutive transmembrane segments (helical) span residues 26–46 (LIVT…FAGI), 71–91 (VLFF…IYLA), 120–140 (TWLL…SAIG), 183–203 (MAVL…YGGI), 212–232 (LSGA…LAKA), 261–281 (VLPA…LFFV), and 293–313 (VGLA…PGIV). Disordered stretches follow at residues 899-924 (GVST…PPAT) and 974-1004 (LGQK…SPSS). 2 stretches are compositionally biased toward low complexity: residues 903–916 (GPGT…QPGD) and 979–1004 (GSAG…SPSS).

The protein belongs to the UPF0182 family.

It localises to the cell membrane. This is UPF0182 protein Noca_1530 from Nocardioides sp. (strain ATCC BAA-499 / JS614).